The sequence spans 176 residues: ADP-ribosylation factor-like protein 8d (176 aa).

GTP contacts are provided by residues 21 to 26, 40 to 43, 62 to 66, and 121 to 124; these read NSGKTS, MIPT, DLGGQ, and NKID.

The protein belongs to the small GTPase superfamily. Arf family. In terms of assembly, interacts with tubulin.

The protein localises to the late endosome membrane. Its subcellular location is the lysosome membrane. It is found in the cytoplasm. It localises to the cytoskeleton. The protein resides in the spindle. In terms of biological role, may play a role in lysosome motility. May play a role in chromosome segregation. In Arabidopsis thaliana (Mouse-ear cress), this protein is ADP-ribosylation factor-like protein 8d.